A 624-amino-acid polypeptide reads, in one-letter code: MPKLRSATSTEGRNMAGARALWRATGVKDNDFGKPIIAIANSFTQFVPGHVHLKDMGSLVASAIEEAGGIAKEFNTIAVDDGIAMGHGGMLYSLPSRELIADSVEYMVNAHCADALVCISNCDKITPGMLMAALRLNIPVVFVSGGPMEAGKTKLSDKLIKLDLVDAMVAGADSNVSDEDSAKIERSACPTCGSCSGMFTANSMNCLTEALGLSLPGNGSMLATHADRRELFLEAGRRVMALAKRYYHQDDESALPRNIANFKAFENAMTLDIAMGGSSNTVLHLLAAAQEADVDFTMADIDRMSRLVPHLCKVAPSTPKYHMEDVHRAGGVMGILGELDRAGLLHTDVFHVAADNDGTPGSGTLKSVLAQYDVMQTQDEKVKHFFMAGPAGIPTTKAFSQDCRWPSLDNDRQEGCIRSREFAFSQEGGLAVLSGNVAENGCIVKTAGVDESNLTFIGSARVYESQDDAVAGILGGEVVAGDVVVIRYEGPKGGPGMQEMLYPTSYLKSRGLGKACALITDGRFSGGTSGLSIGHVSPEAAAGGTIALIENGDRIEIDIPKRSIKLAVSDVELNARREKMHSLGPMAWKPIGRQRYVSLALKAYAMLATSADKGAVRDRSKLED.

Asp-81 contributes to the Mg(2+) binding site. Cys-122 serves as a coordination point for [2Fe-2S] cluster. Mg(2+)-binding residues include Asp-123 and Lys-124. The residue at position 124 (Lys-124) is an N6-carboxylysine. Residue Cys-195 participates in [2Fe-2S] cluster binding. Glu-499 is a Mg(2+) binding site. Catalysis depends on Ser-525, which acts as the Proton acceptor.

The protein belongs to the IlvD/Edd family. As to quaternary structure, homodimer. The cofactor is [2Fe-2S] cluster. It depends on Mg(2+) as a cofactor.

It catalyses the reaction (2R)-2,3-dihydroxy-3-methylbutanoate = 3-methyl-2-oxobutanoate + H2O. The enzyme catalyses (2R,3R)-2,3-dihydroxy-3-methylpentanoate = (S)-3-methyl-2-oxopentanoate + H2O. Its pathway is amino-acid biosynthesis; L-isoleucine biosynthesis; L-isoleucine from 2-oxobutanoate: step 3/4. It participates in amino-acid biosynthesis; L-valine biosynthesis; L-valine from pyruvate: step 3/4. Functionally, functions in the biosynthesis of branched-chain amino acids. Catalyzes the dehydration of (2R,3R)-2,3-dihydroxy-3-methylpentanoate (2,3-dihydroxy-3-methylvalerate) into 2-oxo-3-methylpentanoate (2-oxo-3-methylvalerate) and of (2R)-2,3-dihydroxy-3-methylbutanoate (2,3-dihydroxyisovalerate) into 2-oxo-3-methylbutanoate (2-oxoisovalerate), the penultimate precursor to L-isoleucine and L-valine, respectively. This is Dihydroxy-acid dehydratase from Shewanella baltica (strain OS185).